The following is a 164-amino-acid chain: Proline-rich protein 2 (164 aa).

Positions 1–21 are cleaved as a signal peptide; it reads MNLKVGIAVLIIALIVPSAQP.

As to expression, component of the acid-soluble organic matrix of calcified layers of the shell (at protein level).

The protein resides in the secreted. This Lottia gigantea (Giant owl limpet) protein is Proline-rich protein 2.